Here is a 607-residue protein sequence, read N- to C-terminus: Proteasome-associated ATPase (607 aa).

Residues 1–17 are compositionally biased toward basic and acidic residues; the sequence is MTESDRHDTPKGDRRIS. The disordered stretch occupies residues 1–65; sequence MTESDRHDTP…GRPAADNKEL (65 aa). The stretch at 59–102 forms a coiled coil; sequence AADNKELQERVDNLTARNAKLLDTLKDARQQLVALREEVDRLGQ. 294–299 lines the ATP pocket; it reads GCGKTL. Positions 606–607 are docks into pockets in the proteasome alpha-ring; the sequence is YL.

The protein belongs to the AAA ATPase family. In terms of assembly, homohexamer. Assembles into a hexameric ring structure that caps the 20S proteasome core. Strongly interacts with the prokaryotic ubiquitin-like protein Pup through a hydrophobic interface; the interacting region of ARC lies in its N-terminal coiled-coil domain. There is one Pup binding site per ARC hexamer ring. Upon ATP-binding, the C-terminus of ARC interacts with the alpha-rings of the proteasome core, possibly by binding to the intersubunit pockets.

The protein operates within protein degradation; proteasomal Pup-dependent pathway. Its function is as follows. ATPase which is responsible for recognizing, binding, unfolding and translocation of pupylated proteins into the bacterial 20S proteasome core particle. May be essential for opening the gate of the 20S proteasome via an interaction with its C-terminus, thereby allowing substrate entry and access to the site of proteolysis. Thus, the C-termini of the proteasomal ATPase may function like a 'key in a lock' to induce gate opening and therefore regulate proteolysis. The sequence is that of Proteasome-associated ATPase from Gordonia bronchialis (strain ATCC 25592 / DSM 43247 / BCRC 13721 / JCM 3198 / KCTC 3076 / NBRC 16047 / NCTC 10667) (Rhodococcus bronchialis).